We begin with the raw amino-acid sequence, 206 residues long: Dephospho-CoA kinase (206 aa).

A DPCK domain is found at 4–204 (IVGLTGGIGS…HQYLQLANAQ (201 aa)). Position 12–17 (12–17 (GSGKST)) interacts with ATP.

The protein belongs to the CoaE family.

It is found in the cytoplasm. The enzyme catalyses 3'-dephospho-CoA + ATP = ADP + CoA + H(+). Its pathway is cofactor biosynthesis; coenzyme A biosynthesis; CoA from (R)-pantothenate: step 5/5. Catalyzes the phosphorylation of the 3'-hydroxyl group of dephosphocoenzyme A to form coenzyme A. The chain is Dephospho-CoA kinase from Pasteurella multocida (strain Pm70).